Here is a 316-residue protein sequence, read N- to C-terminus: Acetyl-coenzyme A carboxylase carboxyl transferase subunit alpha (316 aa).

Residues 39-293 (RLQDKSESLT…REQLNSQLHM (255 aa)) form the CoA carboxyltransferase C-terminal domain.

Belongs to the AccA family. Acetyl-CoA carboxylase is a heterohexamer composed of biotin carboxyl carrier protein (AccB), biotin carboxylase (AccC) and two subunits each of ACCase subunit alpha (AccA) and ACCase subunit beta (AccD).

It is found in the cytoplasm. The catalysed reaction is N(6)-carboxybiotinyl-L-lysyl-[protein] + acetyl-CoA = N(6)-biotinyl-L-lysyl-[protein] + malonyl-CoA. The protein operates within lipid metabolism; malonyl-CoA biosynthesis; malonyl-CoA from acetyl-CoA: step 1/1. Functionally, component of the acetyl coenzyme A carboxylase (ACC) complex. First, biotin carboxylase catalyzes the carboxylation of biotin on its carrier protein (BCCP) and then the CO(2) group is transferred by the carboxyltransferase to acetyl-CoA to form malonyl-CoA. The protein is Acetyl-coenzyme A carboxylase carboxyl transferase subunit alpha of Stutzerimonas stutzeri (strain A1501) (Pseudomonas stutzeri).